Reading from the N-terminus, the 98-residue chain is Integration host factor subunit alpha (98 aa).

Belongs to the bacterial histone-like protein family. As to quaternary structure, heterodimer of an alpha and a beta chain.

Its function is as follows. This protein is one of the two subunits of integration host factor, a specific DNA-binding protein that functions in genetic recombination as well as in transcriptional and translational control. This Glaesserella parasuis serovar 5 (strain SH0165) (Haemophilus parasuis) protein is Integration host factor subunit alpha.